A 244-amino-acid chain; its full sequence is 5-oxoprolinase subunit A (244 aa).

The protein belongs to the LamB/PxpA family. As to quaternary structure, forms a complex composed of PxpA, PxpB and PxpC.

The enzyme catalyses 5-oxo-L-proline + ATP + 2 H2O = L-glutamate + ADP + phosphate + H(+). In terms of biological role, catalyzes the cleavage of 5-oxoproline to form L-glutamate coupled to the hydrolysis of ATP to ADP and inorganic phosphate. The sequence is that of 5-oxoprolinase subunit A from Salmonella heidelberg (strain SL476).